The primary structure comprises 96 residues: MKLRPLHDRVIIKRTEVEAKSAGGIVLTGSAAEKSTRGEIVAVGKGRILDNGEVRALDVKAGDKVLFNEGYGVKTEKIDGEEYLIMSESDILAVEE.

This sequence belongs to the GroES chaperonin family. As to quaternary structure, heptamer of 7 subunits arranged in a ring. Interacts with the chaperonin GroEL.

Its subcellular location is the cytoplasm. Together with the chaperonin GroEL, plays an essential role in assisting protein folding. The GroEL-GroES system forms a nano-cage that allows encapsulation of the non-native substrate proteins and provides a physical environment optimized to promote and accelerate protein folding. GroES binds to the apical surface of the GroEL ring, thereby capping the opening of the GroEL channel. In Idiomarina loihiensis (strain ATCC BAA-735 / DSM 15497 / L2-TR), this protein is Co-chaperonin GroES.